Consider the following 520-residue polypeptide: Probable cytochrome P450 6v1 (520 aa).

Cysteine 465 is a binding site for heme.

It belongs to the cytochrome P450 family. Heme is required as a cofactor.

Its subcellular location is the endoplasmic reticulum membrane. The protein localises to the microsome membrane. May be involved in the metabolism of insect hormones and in the breakdown of synthetic insecticides. This Drosophila melanogaster (Fruit fly) protein is Probable cytochrome P450 6v1 (Cyp6v1).